We begin with the raw amino-acid sequence, 316 residues long: MTAQQIDASGRLRHLLTLEGLPRETLLQLLDRAGQIRDAAVGRVGNKRQVLAGSAVCTLFFEPSTRTRSSFQLAAQRLGADVLNFDASTSSTRKGETACDTLRNLEAMGVRGFVVRHPDDGAVAALADAAGEGTALINAGDGRSSHPTQGLLDMLTLRQAKGPDFSKLKVVIVGDVKHSRVARTDLHALRTLGVGEIRVCGPQSLLPDDETLKGCVVGDDFDAMLEGVDALMMLRLQRERMEEGLVPSLEQYHAQYGLTNERLARAGKDAAVLHPGPINRGVEVTDEVADGPQSWVLRQVANGVAVRMAVLETLLG.

Carbamoyl phosphate is bound by residues R66 and T67. Residue K94 coordinates L-aspartate. R116, H146, and Q149 together coordinate carbamoyl phosphate. 2 residues coordinate L-aspartate: R180 and R235. Carbamoyl phosphate is bound by residues G276 and P277.

The protein belongs to the aspartate/ornithine carbamoyltransferase superfamily. ATCase family. Heterododecamer (2C3:3R2) of six catalytic PyrB chains organized as two trimers (C3), and six regulatory PyrI chains organized as three dimers (R2).

The enzyme catalyses carbamoyl phosphate + L-aspartate = N-carbamoyl-L-aspartate + phosphate + H(+). It functions in the pathway pyrimidine metabolism; UMP biosynthesis via de novo pathway; (S)-dihydroorotate from bicarbonate: step 2/3. Functionally, catalyzes the condensation of carbamoyl phosphate and aspartate to form carbamoyl aspartate and inorganic phosphate, the committed step in the de novo pyrimidine nucleotide biosynthesis pathway. The sequence is that of Aspartate carbamoyltransferase catalytic subunit from Stenotrophomonas maltophilia (strain K279a).